We begin with the raw amino-acid sequence, 216 residues long: 1-Cys peroxiredoxin PER1 (216 aa).

The Thioredoxin domain occupies 4–159 (ITLGDTVPNL…VLRALDSLLM (156 aa)). The active-site Cysteine sulfenic acid (-SOH) intermediate is the Cys46. Positions 191–214 (KKMFPQGFKTADLPSKKGYLRHTE) match the Bipartite nuclear localization signal motif.

Belongs to the peroxiredoxin family. Prx6 subfamily. In terms of tissue distribution, predominantly expressed in seed. Expressed in endosperm, embryo and aleurone cells. Also detected in young seedlings, abscission zones, stem branching points.

Its subcellular location is the nucleus. The protein resides in the cytoplasm. The enzyme catalyses a hydroperoxide + [thioredoxin]-dithiol = an alcohol + [thioredoxin]-disulfide + H2O. Functionally, thiol-specific peroxidase that catalyzes the reduction of hydrogen peroxide and organic hydroperoxides to water and alcohols, respectively. Seems to contribute to the inhibition of germination during stress. This is 1-Cys peroxiredoxin PER1 (PER1) from Arabidopsis thaliana (Mouse-ear cress).